The following is a 436-amino-acid chain: MAVSSSNPTQTRTYVLDTSVLLADPASMSRFAEHEVVIPIVVINELEAKRHHPELGYFAREALRFLDDLRVRHGRLDQPVPIGEGTIRVELNHSDPAVLPAGLRSGDNDSRILTVAQNLAAEGRDVVLVSKDLPMRLKAASLGLNAEEYRAGMVIESGWTGMAELQVTDDDLRMLFEHGTIELAEARDLPCHTGLRLLSTRGSALGRVTPDKSVRLVRGDREVFGLRGRSAEQRIALDLLMDPEIGIVSIGGRAGTGKSALALCAGLEAVLERRQHRKIIVFRPLYAVGGQELGYLPGTENDKMGPWAQAVYDTLGAVTSPEVIEEVLDRGMLEVLPLTHIRGRSLHDAFVIVDEAQSLERGVLLTVLSRIGSNSRVVLTHDVAQRDNLRVGRHDGVVAVVEKLKGHPLFAHITLTRSERSPIAALVTEMLQDITI.

A PINc domain is found at 12 to 137 (RTYVLDTSVL…LVSKDLPMRL (126 aa)).

It in the N-terminal section; belongs to the PINc/VapC protein family. In the C-terminal section; belongs to the PhoH family.

The enzyme catalyses n ATP + n H2O + wound RNA = n ADP + n phosphate + unwound RNA.. It catalyses the reaction ATP + H2O = ADP + phosphate + H(+). It carries out the reaction GTP + H2O = GDP + phosphate + H(+). Functionally, unwinds and/or cleaves 5'-tailed RNA in vitro, the reaction is maximal with hydrolyzable ATP; double-stranded (ds)RNA and dsDNA are not unwound. Unlike the protein in mycobacteria there does not seem to be an antitoxin gene upstream, suggesting this is not a toxin-antitoxin system. Has ATPase and GTPase activities. In Thermobispora bispora (strain ATCC 19993 / DSM 43833 / CBS 139.67 / JCM 10125 / KCTC 9307 / NBRC 14880 / R51), this protein is Protein PhoH2.